A 171-amino-acid polypeptide reads, in one-letter code: MNLQQQLAYCQQHQQRLQLRHFDNETAWQLGEKIKRQAEKQGVALAIDITVNHQTLFSYAMAGTCAENQDWLRRKRNVVELLSTSSYAAGLMLQQRETSLDARYGVSLRDYAALGGAFPLQIKQAGIIGSVNVSGAPHLDDHNLLLQVLADFIGLPTGSIELLTPLTPLSV.

This sequence belongs to the UPF0303 family.

The sequence is that of UPF0303 protein YPTS_2661 from Yersinia pseudotuberculosis serotype IB (strain PB1/+).